The primary structure comprises 132 residues: Agouti-signaling protein (132 aa).

The signal sequence occupies residues Met-1 to Ser-22. An N-linked (GlcNAc...) asparagine glycan is attached at Asn-39. A disordered region spans residues Lys-60 to Pro-88. Residues Ser-63–Met-79 show a composition bias toward basic and acidic residues. 5 disulfides stabilise this stretch: Cys-93–Cys-108, Cys-100–Cys-114, Cys-107–Cys-125, Cys-111–Cys-132, and Cys-116–Cys-123. An Agouti domain is found at Cys-93–Cys-132.

The protein localises to the secreted. Its function is as follows. Involved in the regulation of melanogenesis. The binding of ASP to MC1R precludes alpha-MSH initiated signaling and thus blocks production of cAMP, leading to a down-regulation of eumelanogenesis (brown/black pigment) and thus increasing synthesis of pheomelanin (yellow/red pigment). This Macaca cyclopis (Taiwan macaque) protein is Agouti-signaling protein (ASIP).